The following is a 137-amino-acid chain: Methylglyoxal synthase (137 aa).

In terms of domain architecture, MGS-like spans 1–137 (MKIALIAHDK…DLLRGEEPNV (137 aa)). Substrate is bound by residues H8, K12, 34 to 37 (TGTT), and 54 to 55 (SG). D60 (proton donor/acceptor) is an active-site residue. H87 serves as a coordination point for substrate.

The protein belongs to the methylglyoxal synthase family.

It carries out the reaction dihydroxyacetone phosphate = methylglyoxal + phosphate. In terms of biological role, catalyzes the formation of methylglyoxal from dihydroxyacetone phosphate. The polypeptide is Methylglyoxal synthase (Bacillus subtilis (strain 168)).